The chain runs to 377 residues: Dihydroorotate dehydrogenase (quinone) (377 aa).

Residues 82–86 and Thr106 each bind FMN; that span reads AGFDK. Substrate is bound at residue Lys86. 131–135 lines the substrate pocket; it reads NRMGF. FMN contacts are provided by Asn159 and Asn192. A substrate-binding site is contributed by Asn192. Ser195 acts as the Nucleophile in catalysis. Asn197 provides a ligand contact to substrate. FMN is bound by residues Lys228 and Thr256. 257–258 contributes to the substrate binding site; sequence NT. FMN-binding positions include Gly282, Gly311, and 332-333; that span reads YT.

It belongs to the dihydroorotate dehydrogenase family. Type 2 subfamily. As to quaternary structure, monomer. The cofactor is FMN.

It is found in the cell membrane. The enzyme catalyses (S)-dihydroorotate + a quinone = orotate + a quinol. The protein operates within pyrimidine metabolism; UMP biosynthesis via de novo pathway; orotate from (S)-dihydroorotate (quinone route): step 1/1. In terms of biological role, catalyzes the conversion of dihydroorotate to orotate with quinone as electron acceptor. This chain is Dihydroorotate dehydrogenase (quinone), found in Corynebacterium efficiens (strain DSM 44549 / YS-314 / AJ 12310 / JCM 11189 / NBRC 100395).